The chain runs to 120 residues: Putative gamma-glutamylcyclotransferase MJ1514 (120 aa).

7-10 (YGSL) contacts substrate. Residue glutamate 74 is the Proton acceptor of the active site.

This sequence belongs to the gamma-glutamylcyclotransferase family.

In terms of biological role, putative gamma-glutamylcyclotransferase. This chain is Putative gamma-glutamylcyclotransferase MJ1514, found in Methanocaldococcus jannaschii (strain ATCC 43067 / DSM 2661 / JAL-1 / JCM 10045 / NBRC 100440) (Methanococcus jannaschii).